The following is a 92-amino-acid chain: Small ribosomal subunit protein uS19 (92 aa).

The protein belongs to the universal ribosomal protein uS19 family.

Its function is as follows. Protein S19 forms a complex with S13 that binds strongly to the 16S ribosomal RNA. This Bifidobacterium animalis subsp. lactis (strain AD011) protein is Small ribosomal subunit protein uS19.